Here is a 369-residue protein sequence, read N- to C-terminus: Tyrosinase-like protein orsC (369 aa).

The signal sequence occupies residues 1 to 23 (MLAFNPLVTALAALIFLFCQANA). The Cu cation site is built by histidine 112 and histidine 121. 4 N-linked (GlcNAc...) asparagine glycosylation sites follow: asparagine 165, asparagine 179, asparagine 253, and asparagine 272. A Cu cation-binding site is contributed by histidine 315.

It participates in secondary metabolite biosynthesis. Tyrosinase-like protein; part of the gene cluster that mediates the biosynthesis of orsellinic acid, as well as of the cathepsin K inhibitors F9775 A and F9775 B. The non-reducing polyketide synthase orsA produces orsellinic acid by condensing acetyl-CoA with 3 malonyl-CoA units. Further modifications by the decarboxylase orsB and the tyrosinase-like protein orsC lead to the production of F9775 A and F9775 B. The functions of orsD and orsE remain unclear since only orsB and orsC are required to convert orsellinic acid into F9775 A and F9775 B. This chain is Tyrosinase-like protein orsC, found in Emericella nidulans (strain FGSC A4 / ATCC 38163 / CBS 112.46 / NRRL 194 / M139) (Aspergillus nidulans).